The chain runs to 496 residues: L-arabinose isomerase (496 aa).

The Mn(2+) site is built by glutamate 302, glutamate 329, histidine 346, and histidine 445.

The protein belongs to the arabinose isomerase family. Mn(2+) is required as a cofactor.

It carries out the reaction beta-L-arabinopyranose = L-ribulose. The protein operates within carbohydrate degradation; L-arabinose degradation via L-ribulose; D-xylulose 5-phosphate from L-arabinose (bacterial route): step 1/3. Functionally, catalyzes the conversion of L-arabinose to L-ribulose. This Thermotoga sp. (strain RQ2) protein is L-arabinose isomerase.